We begin with the raw amino-acid sequence, 124 residues long: Large ribosomal subunit protein bL17 (124 aa).

It belongs to the bacterial ribosomal protein bL17 family. As to quaternary structure, part of the 50S ribosomal subunit. Contacts protein L32.

The protein is Large ribosomal subunit protein bL17 of Persephonella marina (strain DSM 14350 / EX-H1).